The sequence spans 243 residues: UDP-2,3-diacylglucosamine hydrolase (243 aa).

Asp-8, His-10, Asp-41, Asn-79, and His-114 together coordinate Mn(2+). 79-80 (NR) serves as a coordination point for substrate. Asp-122, Lys-164, Lys-167, and His-195 together coordinate substrate. Mn(2+) is bound by residues His-195 and His-197.

It belongs to the LpxH family. Mn(2+) is required as a cofactor.

It is found in the cell inner membrane. It carries out the reaction UDP-2-N,3-O-bis[(3R)-3-hydroxytetradecanoyl]-alpha-D-glucosamine + H2O = 2-N,3-O-bis[(3R)-3-hydroxytetradecanoyl]-alpha-D-glucosaminyl 1-phosphate + UMP + 2 H(+). Its pathway is glycolipid biosynthesis; lipid IV(A) biosynthesis; lipid IV(A) from (3R)-3-hydroxytetradecanoyl-[acyl-carrier-protein] and UDP-N-acetyl-alpha-D-glucosamine: step 4/6. Hydrolyzes the pyrophosphate bond of UDP-2,3-diacylglucosamine to yield 2,3-diacylglucosamine 1-phosphate (lipid X) and UMP by catalyzing the attack of water at the alpha-P atom. Involved in the biosynthesis of lipid A, a phosphorylated glycolipid that anchors the lipopolysaccharide to the outer membrane of the cell. The sequence is that of UDP-2,3-diacylglucosamine hydrolase from Vibrio vulnificus (strain CMCP6).